The sequence spans 310 residues: HTH-type transcriptional activator TtdR (310 aa).

One can recognise an HTH lysR-type domain in the interval 6–63 (PLAKDLQVLVEIVHSGSFSAAAATLGQTPAFVTKRIQILENTLATTLLNRSARGVALT). The H-T-H motif DNA-binding region spans 23 to 42 (FSAAAATLGQTPAFVTKRIQ).

Belongs to the LysR transcriptional regulatory family.

Functionally, positive regulator required for L-tartrate-dependent anaerobic growth on glycerol. Induces expression of the ttdA-ttdB-ygjE operon. This Escherichia coli O6:K15:H31 (strain 536 / UPEC) protein is HTH-type transcriptional activator TtdR (ttdR).